The primary structure comprises 297 residues: Small ribosomal subunit protein uS2 (297 aa).

A disordered region spans residues 252-297 (GVPGTAFSAATAAPTSWEADGGDWAASSAAPAGESWAETQPAEAKW). A compositionally biased stretch (low complexity) spans 256-289 (TAFSAATAAPTSWEADGGDWAASSAAPAGESWAE).

Belongs to the universal ribosomal protein uS2 family. As to quaternary structure, component of the small ribosomal subunit. Mature ribosomes consist of a small (40S) and a large (60S) subunit. The 40S subunit contains about 33 different proteins and 1 molecule of RNA (18S). The 60S subunit contains about 49 different proteins and 3 molecules of RNA (25S, 5.8S and 5S). Interacts with rps21.

The protein resides in the cytoplasm. In terms of biological role, required for the assembly and/or stability of the 40S ribosomal subunit. Required for the processing of the 20S rRNA-precursor to mature 18S rRNA in a late step of the maturation of 40S ribosomal subunits. The protein is Small ribosomal subunit protein uS2 (rps0) of Aspergillus fumigatus (strain CBS 144.89 / FGSC A1163 / CEA10) (Neosartorya fumigata).